We begin with the raw amino-acid sequence, 103 residues long: Small ribosomal subunit protein uS10 (103 aa).

The protein belongs to the universal ribosomal protein uS10 family. As to quaternary structure, part of the 30S ribosomal subunit.

Functionally, involved in the binding of tRNA to the ribosomes. The polypeptide is Small ribosomal subunit protein uS10 (Xylella fastidiosa (strain M12)).